A 191-amino-acid chain; its full sequence is MVVLGVDPGSRLTGYGVIRQEGTFFTVLSCGVIRLHPRSSHAERIGQIYRELEAVITDYAPECVALETVFLSRNVQSALKLGQVRGAVIALAMNRNLLLHEYAPREVKSAVTGKGAASKEQVAFMVARMLALNPVPEPFDVTDALGIALCDLLRGGSREPFKSAGQSRKGGMSWSQFVGASPDMVIRLFQK.

Active-site residues include Asp-7, Glu-67, and Asp-140. Positions 7, 67, and 140 each coordinate Mg(2+).

Belongs to the RuvC family. As to quaternary structure, homodimer which binds Holliday junction (HJ) DNA. The HJ becomes 2-fold symmetrical on binding to RuvC with unstacked arms; it has a different conformation from HJ DNA in complex with RuvA. In the full resolvosome a probable DNA-RuvA(4)-RuvB(12)-RuvC(2) complex forms which resolves the HJ. The cofactor is Mg(2+).

The protein resides in the cytoplasm. It catalyses the reaction Endonucleolytic cleavage at a junction such as a reciprocal single-stranded crossover between two homologous DNA duplexes (Holliday junction).. Functionally, the RuvA-RuvB-RuvC complex processes Holliday junction (HJ) DNA during genetic recombination and DNA repair. Endonuclease that resolves HJ intermediates. Cleaves cruciform DNA by making single-stranded nicks across the HJ at symmetrical positions within the homologous arms, yielding a 5'-phosphate and a 3'-hydroxyl group; requires a central core of homology in the junction. The consensus cleavage sequence is 5'-(A/T)TT(C/G)-3'. Cleavage occurs on the 3'-side of the TT dinucleotide at the point of strand exchange. HJ branch migration catalyzed by RuvA-RuvB allows RuvC to scan DNA until it finds its consensus sequence, where it cleaves and resolves the cruciform DNA. This is Crossover junction endodeoxyribonuclease RuvC from Pelodictyon phaeoclathratiforme (strain DSM 5477 / BU-1).